A 204-amino-acid chain; its full sequence is UPF0056 membrane protein CT_852 (204 aa).

Transmembrane regions (helical) follow at residues 9-29, 39-59, 66-86, 107-127, 138-158, and 176-196; these read TLLF…IALL, HIIL…VTFG, LGII…SIAI, IFFP…STLG, IVLG…LLSS, and FGIS…STAF.

Belongs to the UPF0056 (MarC) family.

The protein localises to the cell membrane. The polypeptide is UPF0056 membrane protein CT_852 (Chlamydia trachomatis serovar D (strain ATCC VR-885 / DSM 19411 / UW-3/Cx)).